A 555-amino-acid polypeptide reads, in one-letter code: Glypican-6 (555 aa).

Positions 1–23 (MPSWIRAVILPLSGLLLTLPAAA) are cleaved as a signal peptide. Residues 348–357 (PALRSARSAP) show a composition bias toward low complexity. 2 disordered regions span residues 348–376 (PALR…PTTA) and 480–501 (GNDV…GSGC). Residue serine 530 is the site of GPI-anchor amidated serine attachment. The propeptide at 531–555 (ASKFSSSLISWSLVCMVLALQRLYR) is removed in mature form.

Belongs to the glypican family. In terms of tissue distribution, in the cartilage growth-plate, gradient of expression with highest levels from the proliferative and pre-hypertrophic zones to lowest, if any, in the hypertrophic zones (at protein level).

The protein resides in the cell membrane. The protein localises to the secreted. It localises to the extracellular space. In terms of biological role, cell surface proteoglycan that bears heparan sulfate. Putative cell surface coreceptor for growth factors, extracellular matrix proteins, proteases and anti-proteases. Enhances migration and invasion of cancer cells through WNT5A signaling. The sequence is that of Glypican-6 (Gpc6) from Mus musculus (Mouse).